The primary structure comprises 287 residues: Eukaryotic translation initiation factor 3 subunit G (287 aa).

The segment at 163–207 (EEDLESKEKDTKLGPTVPGSGKYVAPGMRGDRPAVTGGAERRSEE) is disordered. One can recognise an RRM domain in the interval 208–286 (NTCRVTNLPE…LVLKVEWTRF (79 aa)).

It belongs to the eIF-3 subunit G family. In terms of assembly, component of the eukaryotic translation initiation factor 3 (eIF-3) complex.

Its subcellular location is the cytoplasm. RNA-binding component of the eukaryotic translation initiation factor 3 (eIF-3) complex, which is involved in protein synthesis of a specialized repertoire of mRNAs and, together with other initiation factors, stimulates binding of mRNA and methionyl-tRNAi to the 40S ribosome. The eIF-3 complex specifically targets and initiates translation of a subset of mRNAs involved in cell proliferation. This subunit can bind 18S rRNA. In Brugia malayi (Filarial nematode worm), this protein is Eukaryotic translation initiation factor 3 subunit G.